A 118-amino-acid polypeptide reads, in one-letter code: UPF0342 protein BCE_0953 (118 aa).

The protein belongs to the UPF0342 family.

In Bacillus cereus (strain ATCC 10987 / NRS 248), this protein is UPF0342 protein BCE_0953.